We begin with the raw amino-acid sequence, 189 residues long: Flavin prenyltransferase UbiX (189 aa).

FMN contacts are provided by residues 11-13 (GAS), Ser37, 88-91 (SMRT), and Arg123. Tyr153 lines the dimethylallyl phosphate pocket.

The protein belongs to the UbiX/PAD1 family.

It carries out the reaction dimethylallyl phosphate + FMNH2 = prenylated FMNH2 + phosphate. Its function is as follows. Flavin prenyltransferase that catalyzes the synthesis of the prenylated FMN cofactor (prenyl-FMN) for 4-hydroxy-3-polyprenylbenzoic acid decarboxylase UbiD. The prenyltransferase is metal-independent and links a dimethylallyl moiety from dimethylallyl monophosphate (DMAP) to the flavin N5 and C6 atoms of FMN. The protein is Flavin prenyltransferase UbiX of Neisseria meningitidis serogroup B (strain ATCC BAA-335 / MC58).